We begin with the raw amino-acid sequence, 150 residues long: Deoxyuridine 5'-triphosphate nucleotidohydrolase (150 aa).

Substrate contacts are provided by residues 70–72 (RSG), N83, and 87–89 (TID).

The protein belongs to the dUTPase family. Requires Mg(2+) as cofactor.

The enzyme catalyses dUTP + H2O = dUMP + diphosphate + H(+). It participates in pyrimidine metabolism; dUMP biosynthesis; dUMP from dCTP (dUTP route): step 2/2. In terms of biological role, this enzyme is involved in nucleotide metabolism: it produces dUMP, the immediate precursor of thymidine nucleotides and it decreases the intracellular concentration of dUTP so that uracil cannot be incorporated into DNA. The polypeptide is Deoxyuridine 5'-triphosphate nucleotidohydrolase (Desulfotalea psychrophila (strain LSv54 / DSM 12343)).